Consider the following 677-residue polypeptide: UvrABC system protein B (677 aa).

The Helicase ATP-binding domain maps to 31-417 (DRIESGETDI…SDGVVEQIIR (387 aa)). 44–51 (GATGTGKS) is an ATP binding site. The Beta-hairpin signature appears at 97–120 (YYDYYQPEAYVPKTDTFIEKDASV). A Helicase C-terminal domain is found at 434 to 596 (QIDDLLEEIR…VTPVPIKKTV (163 aa)). The UVR domain maps to 629-664 (KSHIKSLEAKMYMAAESLMFEEAAELRDEIQSLKEK).

The protein belongs to the UvrB family. Forms a heterotetramer with UvrA during the search for lesions. Interacts with UvrC in an incision complex.

The protein localises to the cytoplasm. The UvrABC repair system catalyzes the recognition and processing of DNA lesions. A damage recognition complex composed of 2 UvrA and 2 UvrB subunits scans DNA for abnormalities. Upon binding of the UvrA(2)B(2) complex to a putative damaged site, the DNA wraps around one UvrB monomer. DNA wrap is dependent on ATP binding by UvrB and probably causes local melting of the DNA helix, facilitating insertion of UvrB beta-hairpin between the DNA strands. Then UvrB probes one DNA strand for the presence of a lesion. If a lesion is found the UvrA subunits dissociate and the UvrB-DNA preincision complex is formed. This complex is subsequently bound by UvrC and the second UvrB is released. If no lesion is found, the DNA wraps around the other UvrB subunit that will check the other stand for damage. The chain is UvrABC system protein B from Tropheryma whipplei (strain TW08/27) (Whipple's bacillus).